Reading from the N-terminus, the 298-residue chain is Cytochrome c oxidase subunit 2 (298 aa).

Residues 1–29 form the signal peptide; the sequence is MMAIATKRRGVAAVMSLGVATMTAVPALA. Gln30 is subject to Pyrrolidone carboxylic acid. Topologically, residues 30–55 are periplasmic; it reads QDVLGDLPVIGKPVNGGMNFQPASSP. The chain crosses the membrane as a helical span at residues 56–88; it reads LAHDQQWLDHFVLYIITAVTIFVCLLLLICIVR. Over 89-103 the chain is Cytoplasmic; that stretch reads FNRRANPVPARFTHN. The helical transmembrane segment at 104 to 134 threads the bilayer; the sequence is TPIEVIWTLVPVLILVAIGAFSLPILFRSQE. Topologically, residues 135–280 are periplasmic; it reads MPNDPDLVIK…WLAGAKEEFA (146 aa). Residues His210, Cys245, Glu247, Cys249, His253, and Met256 each contribute to the Cu cation site. The propeptide at 281 to 298 is C-terminal propeptide; that stretch reads ADASDYLPASPVKLASAE.

This sequence belongs to the cytochrome c oxidase subunit 2 family. Binuclear copper center (CuA) is required as a cofactor.

The protein resides in the cell inner membrane. It catalyses the reaction 4 Fe(II)-[cytochrome c] + O2 + 8 H(+)(in) = 4 Fe(III)-[cytochrome c] + 2 H2O + 4 H(+)(out). In terms of biological role, subunits I and II form the functional core of the enzyme complex. Electrons originating in cytochrome c are transferred via heme a and Cu(A) to the binuclear center formed by heme a3 and Cu(B). The chain is Cytochrome c oxidase subunit 2 (ctaC) from Paracoccus denitrificans.